Here is a 217-residue protein sequence, read N- to C-terminus: Adenylate kinase (217 aa).

Glycine 12 to serine 17 contacts ATP. An NMP region spans residues serine 32–valine 61. AMP-binding positions include threonine 33, arginine 38, leucine 59–valine 61, glycine 87–arginine 90, and glutamine 94. Positions glycine 128–aspartate 165 are LID. Arginine 129 contributes to the ATP binding site. Residues cysteine 132 and cysteine 135 each coordinate Zn(2+). Residue isoleucine 138–tyrosine 139 coordinates ATP. Residues cysteine 152 and aspartate 155 each coordinate Zn(2+). Residues arginine 162 and arginine 173 each coordinate AMP. Residue glutamine 201 coordinates ATP.

Belongs to the adenylate kinase family. In terms of assembly, monomer.

It is found in the cytoplasm. The enzyme catalyses AMP + ATP = 2 ADP. It functions in the pathway purine metabolism; AMP biosynthesis via salvage pathway; AMP from ADP: step 1/1. Catalyzes the reversible transfer of the terminal phosphate group between ATP and AMP. Plays an important role in cellular energy homeostasis and in adenine nucleotide metabolism. In Acholeplasma laidlawii (strain PG-8A), this protein is Adenylate kinase.